The chain runs to 206 residues: Charged multivesicular body protein 6 (206 aa).

Gly-2 carries the N-myristoyl glycine lipid modification. Residues 11–103 adopt a coiled-coil conformation; that stretch reads TRVTEQDRAV…AQIEMKVIEG (93 aa). Residues 167-206 form a disordered region; it reads EADLELPEVPGEELPEVPEQEPVREKERVKKKPEREMVAV. Residues 168-185 show a composition bias toward acidic residues; it reads ADLELPEVPGEELPEVPE. The Type-2 MIT-interacting motif motif lies at 170–181; the sequence is LELPEVPGEELP. Residues 187–206 show a composition bias toward basic and acidic residues; that stretch reads EPVREKERVKKKPEREMVAV.

Belongs to the SNF7 family. In terms of assembly, probable core component of the endosomal sorting required for transport complex III (ESCRT-III). ESCRT-III components are thought to multimerize to form a flat lattice on the perimeter membrane of the endosome.

It is found in the endomembrane system. The protein localises to the late endosome membrane. Functionally, probable core component of the endosomal sorting required for transport complex III (ESCRT-III) which is involved in multivesicular bodies (MVBs) formation and sorting of endosomal cargo proteins into MVBs. MVBs contain intraluminal vesicles (ILVs) that are generated by invagination and scission from the limiting membrane of the endosome and mostly are delivered to lysosomes enabling degradation of membrane proteins, such as stimulated growth factor receptors, lysosomal enzymes and lipids. In the ESCRT-III complex, it probably serves as an acceptor for the ESCRT-II complex on endosomal membranes. The sequence is that of Charged multivesicular body protein 6 (chmp6) from Danio rerio (Zebrafish).